The chain runs to 652 residues: DNA ligase (652 aa).

Residues 29 to 33 (DSQYD), 78 to 79 (SL), and E107 each bind NAD(+). The active-site N6-AMP-lysine intermediate is the K109. NAD(+) is bound by residues R130, E164, K278, and K302. Positions 395, 398, 413, and 418 each coordinate Zn(2+). Residues 577–652 (STDAQLSGLT…IQDEDWLLNL (76 aa)) enclose the BRCT domain.

Belongs to the NAD-dependent DNA ligase family. LigA subfamily. Requires Mg(2+) as cofactor. Mn(2+) is required as a cofactor.

It catalyses the reaction NAD(+) + (deoxyribonucleotide)n-3'-hydroxyl + 5'-phospho-(deoxyribonucleotide)m = (deoxyribonucleotide)n+m + AMP + beta-nicotinamide D-nucleotide.. In terms of biological role, DNA ligase that catalyzes the formation of phosphodiester linkages between 5'-phosphoryl and 3'-hydroxyl groups in double-stranded DNA using NAD as a coenzyme and as the energy source for the reaction. It is essential for DNA replication and repair of damaged DNA. The sequence is that of DNA ligase from Streptococcus agalactiae serotype III (strain NEM316).